The chain runs to 201 residues: 3-isopropylmalate dehydratase small subunit (201 aa).

Belongs to the LeuD family. LeuD type 1 subfamily. Heterodimer of LeuC and LeuD.

The enzyme catalyses (2R,3S)-3-isopropylmalate = (2S)-2-isopropylmalate. It functions in the pathway amino-acid biosynthesis; L-leucine biosynthesis; L-leucine from 3-methyl-2-oxobutanoate: step 2/4. Catalyzes the isomerization between 2-isopropylmalate and 3-isopropylmalate, via the formation of 2-isopropylmaleate. This is 3-isopropylmalate dehydratase small subunit (leuD) from Thermus thermophilus (strain ATCC 27634 / DSM 579 / HB8).